The chain runs to 217 residues: Ribonuclease T (217 aa).

The Exonuclease domain maps to 20 to 195; it reads VVVDVETAGF…YDTEKTAELF (176 aa). The Mg(2+) site is built by Asp-23, Glu-25, His-182, and Asp-187. The active-site Proton donor/acceptor is the His-182.

It belongs to the RNase T family. As to quaternary structure, homodimer. Mg(2+) serves as cofactor.

Functionally, trims short 3' overhangs of a variety of RNA species, leaving a one or two nucleotide 3' overhang. Responsible for the end-turnover of tRNA: specifically removes the terminal AMP residue from uncharged tRNA (tRNA-C-C-A). Also appears to be involved in tRNA biosynthesis. The polypeptide is Ribonuclease T (Vibrio vulnificus (strain CMCP6)).